We begin with the raw amino-acid sequence, 987 residues long: UPF0182 protein Lxx09300 (987 aa).

Helical transmembrane passes span 17-37, 59-79, 108-128, 167-187, 206-226, 256-276, and 283-303; these read VWTT…FAGL, AAIA…WVVI, RLAM…SAAS, VGFA…TCYL, VQIS…VWLD, AVLA…AFTG, and VGTA…PWAI. Disordered regions lie at residues 700–719 and 886–947; these read RDDA…DPTL and TAGD…ALQQ. Residues 705–719 show a composition bias toward low complexity; the sequence is TTPNDPTSSPTDPTL. Over residues 897–932 the composition is skewed to gly residues; that stretch reads GGSGGGSSGDAGSSAGGGSSGGGGSSAGGSSSGSGS. Low complexity predominate over residues 933–947; that stretch reads SGTQSNAALQRALQQ.

It belongs to the UPF0182 family.

It is found in the cell membrane. The protein is UPF0182 protein Lxx09300 of Leifsonia xyli subsp. xyli (strain CTCB07).